A 115-amino-acid polypeptide reads, in one-letter code: T cell receptor beta variable 11-3 (115 aa).

The first 21 residues, 1 to 21 (MGTRLLCWVAFCLLVEELIEA), serve as a signal peptide directing secretion. One can recognise an Ig-like domain in the interval 22-115 (GVVQSPRYKI…SAVYLCASSL (94 aa)). A disulfide bond links C42 and C111.

Alpha-beta TR is a heterodimer composed of an alpha and beta chain; disulfide-linked. The alpha-beta TR is associated with the transmembrane signaling CD3 coreceptor proteins to form the TR-CD3 (TcR or TCR). The assembly of alpha-beta TR heterodimers with CD3 occurs in the endoplasmic reticulum where a single alpha-beta TR heterodimer associates with one CD3D-CD3E heterodimer, one CD3G-CD3E heterodimer and one CD247 homodimer forming a stable octameric structure. CD3D-CD3E and CD3G-CD3E heterodimers preferentially associate with TR alpha and TR beta chains, respectively. The association of the CD247 homodimer is the last step of TcR assembly in the endoplasmic reticulum and is required for transport to the cell surface.

It is found in the cell membrane. V region of the variable domain of T cell receptor (TR) beta chain that participates in the antigen recognition. Alpha-beta T cell receptors are antigen specific receptors which are essential to the immune response and are present on the cell surface of T lymphocytes. Recognize peptide-major histocompatibility (MH) (pMH) complexes that are displayed by antigen presenting cells (APC), a prerequisite for efficient T cell adaptive immunity against pathogens. Binding of alpha-beta TR to pMH complex initiates TR-CD3 clustering on the cell surface and intracellular activation of LCK that phosphorylates the ITAM motifs of CD3G, CD3D, CD3E and CD247 enabling the recruitment of ZAP70. In turn ZAP70 phosphorylates LAT, which recruits numerous signaling molecules to form the LAT signalosome. The LAT signalosome propagates signal branching to three major signaling pathways, the calcium, the mitogen-activated protein kinase (MAPK) kinase and the nuclear factor NF-kappa-B (NF-kB) pathways, leading to the mobilization of transcription factors that are critical for gene expression and essential for T cell growth and differentiation. The T cell repertoire is generated in the thymus, by V-(D)-J rearrangement. This repertoire is then shaped by intrathymic selection events to generate a peripheral T cell pool of self-MH restricted, non-autoaggressive T cells. Post-thymic interaction of alpha-beta TR with the pMH complexes shapes TR structural and functional avidity. This chain is T cell receptor beta variable 11-3, found in Homo sapiens (Human).